Reading from the N-terminus, the 878-residue chain is Leucine--tRNA ligase (878 aa).

The 'HIGH' region signature appears at 43 to 54; sequence PYPSAQGLHVGH. Positions 634-638 match the 'KMSKS' region motif; the sequence is KMSKA. ATP is bound at residue Lys-637.

This sequence belongs to the class-I aminoacyl-tRNA synthetase family.

The protein resides in the cytoplasm. It carries out the reaction tRNA(Leu) + L-leucine + ATP = L-leucyl-tRNA(Leu) + AMP + diphosphate. The polypeptide is Leucine--tRNA ligase (Treponema pallidum subsp. pallidum (strain SS14)).